The sequence spans 213 residues: Probable transaldolase (213 aa).

The active-site Schiff-base intermediate with substrate is Lys83.

It belongs to the transaldolase family. Type 3B subfamily.

Its subcellular location is the cytoplasm. It catalyses the reaction D-sedoheptulose 7-phosphate + D-glyceraldehyde 3-phosphate = D-erythrose 4-phosphate + beta-D-fructose 6-phosphate. Its pathway is carbohydrate degradation; pentose phosphate pathway; D-glyceraldehyde 3-phosphate and beta-D-fructose 6-phosphate from D-ribose 5-phosphate and D-xylulose 5-phosphate (non-oxidative stage): step 2/3. Transaldolase is important for the balance of metabolites in the pentose-phosphate pathway. This Geobacillus thermodenitrificans (strain NG80-2) protein is Probable transaldolase.